A 517-amino-acid chain; its full sequence is Peptide chain release factor 3 (517 aa).

Positions 9–269 constitute a tr-type G domain; it reads AKRRTFAIIS…DFVEHAPAPR (261 aa). Residues 18–25, 86–90, and 140–143 contribute to the GTP site; these read SHPDAGKT, DTPGH, and NKLD.

This sequence belongs to the TRAFAC class translation factor GTPase superfamily. Classic translation factor GTPase family. PrfC subfamily.

It localises to the cytoplasm. Its function is as follows. Increases the formation of ribosomal termination complexes and stimulates activities of RF-1 and RF-2. It binds guanine nucleotides and has strong preference for UGA stop codons. It may interact directly with the ribosome. The stimulation of RF-1 and RF-2 is significantly reduced by GTP and GDP, but not by GMP. The chain is Peptide chain release factor 3 from Halorhodospira halophila (strain DSM 244 / SL1) (Ectothiorhodospira halophila (strain DSM 244 / SL1)).